The following is a 413-amino-acid chain: MKIYLVGGAVRDALLGLPVKDKDWVVVGATPQEMLDAGYQQVGRDFPVFLHPQTHEEYALARTERKSGSGYTGFTCYAAPDVTLEADLQRRDLTINALARDDDGQIIDPYHGRRDLEARLLRHVSPAFGEDPLRVLRVARFAARYAHLSFRIADETLALMREMTAAGELEHLTPERVWKETENALTTRNPQVYFQVLRDCGALRVLFPEIDALFGVPAPAKWHPEIDTGVHTLMTLSMAAMLSPQLDVRFATLCHDLGKGLTPKNLWPRHHGHGPAGVKLVEQLCQRLRVPNDLRDLAKLVAEYHDLIHTFPILQPKTIVKLFDAIDAWRKPQRVEQIALTSEADVRGRTGFEASDYPQGRWLREAWQVAQAVPTKEVVEAGFKGIEIREELTKRRIAAVANWKEKRCPNPAS.

Positions 8 and 11 each coordinate ATP. CTP contacts are provided by Gly8 and Arg11. Residues Asp21 and Asp23 each coordinate Mg(2+). Residues Arg91, Arg137, and Arg140 each coordinate ATP. Residues Arg91, Arg137, and Arg140 each contribute to the CTP site. The region spanning 228–329 (TGVHTLMTLS…VKLFDAIDAW (102 aa)) is the HD domain.

This sequence belongs to the tRNA nucleotidyltransferase/poly(A) polymerase family. Bacterial CCA-adding enzyme type 1 subfamily. Monomer. Can also form homodimers and oligomers. Requires Mg(2+) as cofactor. It depends on Ni(2+) as a cofactor.

The enzyme catalyses a tRNA precursor + 2 CTP + ATP = a tRNA with a 3' CCA end + 3 diphosphate. It carries out the reaction a tRNA with a 3' CCA end + 2 CTP + ATP = a tRNA with a 3' CCACCA end + 3 diphosphate. In terms of biological role, catalyzes the addition and repair of the essential 3'-terminal CCA sequence in tRNAs without using a nucleic acid template. Adds these three nucleotides in the order of C, C, and A to the tRNA nucleotide-73, using CTP and ATP as substrates and producing inorganic pyrophosphate. tRNA 3'-terminal CCA addition is required both for tRNA processing and repair. Also involved in tRNA surveillance by mediating tandem CCA addition to generate a CCACCA at the 3' terminus of unstable tRNAs. While stable tRNAs receive only 3'-terminal CCA, unstable tRNAs are marked with CCACCA and rapidly degraded. The chain is Multifunctional CCA protein from Salmonella agona (strain SL483).